The sequence spans 91 residues: Small ribosomal subunit protein uS19 (91 aa).

Belongs to the universal ribosomal protein uS19 family.

In terms of biological role, protein S19 forms a complex with S13 that binds strongly to the 16S ribosomal RNA. In Metamycoplasma hominis (strain ATCC 23114 / DSM 25592 / NBRC 14850 / NCTC 10111 / PG21) (Mycoplasma hominis), this protein is Small ribosomal subunit protein uS19.